The following is a 1039-amino-acid chain: Error-prone DNA polymerase (1039 aa).

Belongs to the DNA polymerase type-C family. DnaE2 subfamily.

Its subcellular location is the cytoplasm. The catalysed reaction is DNA(n) + a 2'-deoxyribonucleoside 5'-triphosphate = DNA(n+1) + diphosphate. DNA polymerase involved in damage-induced mutagenesis and translesion synthesis (TLS). It is not the major replicative DNA polymerase. This Corynebacterium diphtheriae (strain ATCC 700971 / NCTC 13129 / Biotype gravis) protein is Error-prone DNA polymerase.